The chain runs to 138 residues: Basic phospholipase A2 Mtx-b (138 aa).

The N-terminal stretch at Met-1–Gly-16 is a signal peptide. 7 disulfides stabilise this stretch: Cys-42–Cys-131, Cys-44–Cys-60, Cys-59–Cys-111, Cys-65–Cys-138, Cys-66–Cys-104, Cys-73–Cys-97, and Cys-91–Cys-102. Ca(2+)-binding residues include Tyr-43, Gly-45, and Gly-47. Residue His-63 is part of the active site. Residue Asp-64 coordinates Ca(2+). Asp-105 is an active-site residue.

Heterodimer of an acidic subunit and a basic chain. The acidic subunit is non-toxic, without enzymatic activity and comprises 3 peptides that are cross-linked by 7 disulfide bridges. The basic subunit is toxic, has phospholipase A2 activity and is composed of a single chain. The cofactor is Ca(2+). In terms of tissue distribution, expressed by the venom gland.

It localises to the secreted. The catalysed reaction is a 1,2-diacyl-sn-glycero-3-phosphocholine + H2O = a 1-acyl-sn-glycero-3-phosphocholine + a fatty acid + H(+). Snake venom phospholipase A2 (PLA2) that inhibits neuromuscular transmission by blocking acetylcholine release from the nerve termini. PLA2 catalyzes the calcium-dependent hydrolysis of the 2-acyl groups in 3-sn-phosphoglycerides. In Crotalus scutulatus scutulatus (Mojave rattlesnake), this protein is Basic phospholipase A2 Mtx-b.